A 400-amino-acid chain; its full sequence is Argininosuccinate synthase (400 aa).

A8–S16 serves as a coordination point for ATP. An L-citrulline-binding site is contributed by Y87. G117 lines the ATP pocket. L-aspartate-binding residues include T119, N123, and D124. An L-citrulline-binding site is contributed by N123. Positions 127, 175, 260, and 272 each coordinate L-citrulline.

Belongs to the argininosuccinate synthase family. Type 1 subfamily. Homotetramer.

The protein localises to the cytoplasm. The catalysed reaction is L-citrulline + L-aspartate + ATP = 2-(N(omega)-L-arginino)succinate + AMP + diphosphate + H(+). It participates in amino-acid biosynthesis; L-arginine biosynthesis; L-arginine from L-ornithine and carbamoyl phosphate: step 2/3. This is Argininosuccinate synthase from Mycobacterium sp. (strain JLS).